The chain runs to 371 residues: MELQEVLHMNEGEGDTSYAKNASYNLALAKVKPFLEQCIRELLRANLPNINKYIKVADLGCASGPNTLLTVRDIVQSIDKVGQEEKNELERPTIQIFLNDLFQNDFNSVFKLLPSFYRKLEKENGRKIGSCLISAMPGSFYGRLFPEESMHFLHSCYSVHWLSQVPSGLVIELGIGANKGSIYSSKGCRPPVQKAYLDQFTKDFTTFLRIHSEELFSHGRMLLTCICKGVELDARNAIDLLEMAINDLVVEGHLEEEKLDSFNLPVYIPSAEEVKCIVEEEGSFEILYLETFKVLYDAGFSIDDEHIKAEYVASSVRAVYEPILASHFGEAIIPDIFHRFAKHAAKVLPLGKGFYNNLIISLAKKPEKSDV.

Residues Tyr18, Cys61, Asn66, Asp100, Leu101, Ser139, Phe140, and Cys156 each contribute to the S-adenosyl-L-homocysteine site. The theobromine site is built by Tyr157, His160, and Trp161. The Mg(2+) site is built by Asn178, Asp260, Phe262, and Asn263. A theobromine-binding site is contributed by Tyr355.

This sequence belongs to the methyltransferase superfamily. Type-7 methyltransferase family. It depends on Mg(2+) as a cofactor.

It carries out the reaction 7-methylxanthine + S-adenosyl-L-methionine = theobromine + S-adenosyl-L-homocysteine + H(+). It functions in the pathway alkaloid biosynthesis. In terms of biological role, involved in the biosynthesis of caffeine. Catalyzes the conversion of 7-methylxanthine (7mX) to theobromine and with a lower activity of paraxanthine to caffeine. The polypeptide is Monomethylxanthine methyltransferase 2 (Coffea canephora (Robusta coffee)).